The sequence spans 333 residues: UDP-3-O-acylglucosamine N-acyltransferase 2 (333 aa).

Catalysis depends on H243, which acts as the Proton acceptor.

This sequence belongs to the transferase hexapeptide repeat family. LpxD subfamily. In terms of assembly, homotrimer.

The catalysed reaction is a UDP-3-O-[(3R)-3-hydroxyacyl]-alpha-D-glucosamine + a (3R)-hydroxyacyl-[ACP] = a UDP-2-N,3-O-bis[(3R)-3-hydroxyacyl]-alpha-D-glucosamine + holo-[ACP] + H(+). It functions in the pathway bacterial outer membrane biogenesis; LPS lipid A biosynthesis. Catalyzes the N-acylation of UDP-3-O-acylglucosamine using 3-hydroxyacyl-ACP as the acyl donor. Is involved in the biosynthesis of lipid A, a phosphorylated glycolipid that anchors the lipopolysaccharide to the outer membrane of the cell. This chain is UDP-3-O-acylglucosamine N-acyltransferase 2, found in Koribacter versatilis (strain Ellin345).